A 144-amino-acid polypeptide reads, in one-letter code: Small ribosomal subunit protein eS12y (144 aa).

Serine 2 bears the N-acetylserine mark.

The protein belongs to the eukaryotic ribosomal protein eS12 family.

In Arabidopsis thaliana (Mouse-ear cress), this protein is Small ribosomal subunit protein eS12y (RPS12C).